The chain runs to 145 residues: Superoxide dismutase [Mn/Fe] (145 aa).

Positions 10 and 64 each coordinate Fe(3+). Residues H10 and H64 each coordinate Mn(2+). A disordered region spans residues 126–145; sequence TSTANQDTPISEGKKPILGL.

It belongs to the iron/manganese superoxide dismutase family. It depends on Mn(2+) as a cofactor. Fe(3+) is required as a cofactor.

It carries out the reaction 2 superoxide + 2 H(+) = H2O2 + O2. Functionally, destroys superoxide anion radicals which are normally produced within the cells and which are toxic to biological systems. Catalyzes the dismutation of superoxide anion radicals into O2 and H2O2 by successive reduction and oxidation of the transition metal ion at the active site. In Streptococcus mitis, this protein is Superoxide dismutase [Mn/Fe] (sodA).